Consider the following 657-residue polypeptide: Glycogen debranching enzyme (657 aa).

Aspartate 336 functions as the Nucleophile in the catalytic mechanism. The Proton donor role is filled by glutamate 371. Positions 460–479 (ANGEENRDGTNNNYSNNHGK) are disordered.

Belongs to the glycosyl hydrolase 13 family.

The catalysed reaction is Hydrolysis of (1-&gt;6)-alpha-D-glucosidic linkages to branches with degrees of polymerization of three or four glucose residues in limit dextrin.. It participates in glycan degradation; glycogen degradation. Its function is as follows. Removes maltotriose and maltotetraose chains that are attached by 1,6-alpha-linkage to the limit dextrin main chain, generating a debranched limit dextrin. The protein is Glycogen debranching enzyme of Escherichia coli O127:H6 (strain E2348/69 / EPEC).